A 299-amino-acid chain; its full sequence is Probable lipid kinase YegS (299 aa).

A DAGKc domain is found at 2–133 (ANFPASLLIL…IDMARVNDKT (132 aa)). ATP is bound by residues Thr-40, 66 to 72 (GDGTINE), and Thr-95. Mg(2+) contacts are provided by Leu-215, Asp-218, and Leu-220. Glu-271 acts as the Proton acceptor in catalysis.

Belongs to the diacylglycerol/lipid kinase family. YegS lipid kinase subfamily. It depends on Mg(2+) as a cofactor. Ca(2+) is required as a cofactor.

The protein resides in the cytoplasm. Functionally, probably phosphorylates lipids; the in vivo substrate is unknown. This Salmonella agona (strain SL483) protein is Probable lipid kinase YegS.